Reading from the N-terminus, the 465-residue chain is Trigger factor (465 aa).

The 86-residue stretch at 163–248 folds into the PPIase FKBP-type domain; the sequence is GDVINFNFKG…INKIKENQPA (86 aa). Residues 431 to 465 are disordered; that stretch reads EIVNKNQNDNEIEQDKEQKDNNEEKIKQENNLENK. Residues 443–465 show a composition bias toward basic and acidic residues; sequence EQDKEQKDNNEEKIKQENNLENK.

Belongs to the FKBP-type PPIase family. Tig subfamily.

It is found in the cytoplasm. It catalyses the reaction [protein]-peptidylproline (omega=180) = [protein]-peptidylproline (omega=0). Its function is as follows. Involved in protein export. Acts as a chaperone by maintaining the newly synthesized protein in an open conformation. Functions as a peptidyl-prolyl cis-trans isomerase. The chain is Trigger factor from Mesomycoplasma hyopneumoniae (strain 232) (Mycoplasma hyopneumoniae).